Here is a 314-residue protein sequence, read N- to C-terminus: DDRGK domain-containing protein 1 (314 aa).

Residues 1-28 (MVAPVWYLVAAALLVGFILFLTRSRGRA) form a helical membrane-spanning segment. A mediates interaction with CDK5RAP3 region spans residues 1–114 (MVAPVWYLVA…VEKPAETHLS (114 aa)). Residues 29-314 (ASAGQEPLHN…GRESPAQAPA (286 aa)) lie on the Cytoplasmic side of the membrane. 2 disordered regions span residues 31-75 (AGQE…SRLQ) and 100-186 (QEEE…QREH). A phosphoserine mark is found at S72 and S114. A mediates interaction with TRIP4 region spans residues 118–216 (GAKKLRKLEE…MTEEQSQSFL (99 aa)). A compositionally biased stretch (basic and acidic residues) spans 124 to 186 (KLEEKQARKA…AREEQAQREH (63 aa)). The UFM1-interacting motif (UFIM) signature appears at 195 to 209 (AFVVEEEGVGETMTE). Positions 216-314 (LTEFINYIKQ…GRESPAQAPA (99 aa)) are mediates interaction with UFL1. The region spanning 229 to 273 (VLLEDLASQVGLRTQDTINRIQDLLAEGTITGVIDDRGKFIYITP) is the PCI domain. K267 participates in a covalent cross-link: Glycyl lysine isopeptide (Lys-Gly) (interchain with G-Cter in UFM1).

It belongs to the DDRGK1 family. In terms of assembly, component of the UFM1 ribosome E3 ligase (UREL) complex, composed of UFL1, DDRGK1 and CDK5RAP3. Interacts with (unphosphorylated) ERN1/IRE1-alpha; interaction is dependent on UFM1 and takes place in response to endoplasmic reticulum stress, regulating ERN1/IRE1-alpha stability. Interacts with NFKBIA. Interacts with SOX9. Post-translationally, ubiquitinated. Ubiquitination probably triggers proteasomal degradation and is negatively regulated by UFL1, the enzyme involved in the ufmylation of DDRGK1. In terms of processing, ufmylated; conjugated to ubiquitin-like protein UFM1, probably at Lys-267 by UFL1. The relevance of ufmylation is however unclear: as DDRGK1 acts as a substrate adapters for ufmylation, it is uncertain whether ufmylation is a collateral effect of ufmylation process or is required to regulate its activity. As to expression, widely expressed (at protein level). In the brain, highest levels in medulla oblongata, followed by cerebral cortex, cerebellum and frontal lobe.

Its subcellular location is the endoplasmic reticulum membrane. Component of the UFM1 ribosome E3 ligase (UREL) complex, a multiprotein complex that catalyzes ufmylation of endoplasmic reticulum-docked proteins. The UREL complex plays a key role in ribosome recycling by mediating mono-ufmylation of the RPL26/uL24 subunit of the 60S ribosome following ribosome dissociation: ufmylation weakens the junction between post-termination 60S subunits and SEC61 translocons, promoting release and recycling of the large ribosomal subunit from the endoplasmic reticulum membrane. Ufmylation of RPL26/uL24 and subsequent 60S ribosome recycling either take place after normal termination of translation or after ribosome stalling during cotranslational translocation at the endoplasmic reticulum. Within the UREL complex, DDRGK1 tethers the complex to the endoplasmic reticulum membrane to restrict its activity to endoplasmic reticulum-docked ribosomes and acts as an ufmylation 'reader': following RPL26/uL24 ufmylation, DDRGK1 specifically binds to ufmylated RPL26/uL24 via its UFIM motif, resulting in stable association between the 60S ribosome and the UREL complex, followed by dissociation of the 60S ribosome subunit from the endoplasmic reticulum membrane. The UREL complex is also involved in reticulophagy in response to endoplasmic reticulum stress by promoting ufmylation of proteins such as CYB5R3 and RPN1, thereby promoting lysosomal degradation of ufmylated proteins. Ufmylation-dependent reticulophagy inhibits the unfolded protein response (UPR) by regulating ERN1/IRE1-alpha stability. Acts as a regulator of immunity by promoting differentiation of B-cells into plasma cells: acts by promoting expansion of the endoplasmic reticulum and regulating the unfolded protein response (UPR). May also be required for TRIP4 ufmylation. May play a role in NF-kappa-B-mediated transcription through regulation of the phosphorylation and the degradation of NFKBIA, the inhibitor of NF-kappa-B. Plays a role in cartilage development through SOX9, inhibiting the ubiquitin-mediated proteasomal degradation of this transcriptional regulator. Required for stabilization and ufmylation of ATG9A. The sequence is that of DDRGK domain-containing protein 1 from Homo sapiens (Human).